The chain runs to 1551 residues: Envelopment polyprotein (1551 aa).

The first 17 residues, 1 to 17, serve as a signal peptide directing secretion; it reads MSKRVLIIAVVVYLVFT. Residues 18–546 lie on the Lumenal side of the membrane; sequence TQNQITGNHT…CRMSSRPTVA (529 aa). Residues 24–66 form a disordered region; the sequence is GNHTTINSSSPSTTEASSTPTVSRTPQTTTTSTAVSTTITATT. N-linked (GlcNAc...) asparagine; by host glycosylation is found at Asn25 and Asn30. Over residues 31–66 the composition is skewed to low complexity; it reads SSSPSTTEASSTPTVSRTPQTTTTSTAVSTTITATT. 3 N-linked (GlcNAc...) asparagine; by host glycosylation sites follow: Asn80, Asn142, and Asn413. A helical transmembrane segment spans residues 547–567; sequence LLLGIWIGCGYILTCIFSFLL. Residues 568–675 lie on the Cytoplasmic side of the membrane; it reads YHLILFFANC…ISVGIFLKRT (108 aa). Residues 676–696 traverse the membrane as a helical segment; that stretch reads TWLVVLLVLLGLAISPVQGAP. Residues 697–704 lie on the Lumenal side of the membrane; sequence TEVSNVKQ. A helical membrane pass occupies residues 705-725; sequence DGDYSICYFIFGCLVTAALLL. Residues 726-823 lie on the Cytoplasmic side of the membrane; the sequence is KVKRTNSNGI…REKLFTTGLQ (98 aa). The helical transmembrane segment at 824-844 threads the bilayer; sequence LFINKTNVVVFALIMCFLLLL. The Lumenal portion of the chain corresponds to 845–1451; sequence TGHNASAFDS…GDFFKHYIGS (607 aa). N-linked (GlcNAc...) asparagine; by host glycosylation is found at Asn848, Asn1201, Asn1258, and Asn1420. The cysteines at positions 1023 and 1216 are disulfide-linked. Residues 1452–1472 traverse the membrane as a helical segment; the sequence is IAVGVLGTVLPFALLILFFIY. At 1473-1551 the chain is on the cytoplasmic side; it reads GDKMLWPFKV…KKEKKLSEIA (79 aa).

This sequence belongs to the nairovirus envelope glycoprotein family. As to quaternary structure, heterodimer with glycoprotein C; in prefusion state. Heterodimer with glycoprotein N; in prefusion state. Homotrimeric; in postfusion state. In terms of processing, specific enzymatic cleavage by host MBTPS1/S1P/SKI-1 endopeptidase yield glycoprotein N. Specific enzymatic cleavages by host furin-like protease and MBTPS1/S1P endopeptidase yield GP38. Post-translationally, glycosylated.

The protein resides in the host endoplasmic reticulum membrane. It localises to the virion membrane. It is found in the host Golgi apparatus membrane. Its function is as follows. Glycoprotein N and glycoprotein C interact with each other and are present at the surface of the virion. Glycoprotein N probably locks the Gn-Gc complex in a prefusion state. Glycoprotein N and glycoprotein C are able to attach the virion to host cell receptors. This attachment induces virion internalization predominantly through clathrin-dependent endocytosis. Functionally, glycoprotein C and glycoprotein N interact with each other and are present at the surface of the virion. The spikes at the surface of the virion are formed by an N-terminal extension of glycoprotein C. Glycoprotein N and glycoprotein C are able to attach the virion to host cell receptors. This attachment induces virion internalization predominantly through clathrin-dependent endocytosis. Class II fusion protein that promotes fusion of viral membrane with host endosomal membrane after endocytosis of the virion. Exposure to potassium is necessary for the conformational change leading to fusion. This chain is Envelopment polyprotein (GP), found in Amblyomma variegatum (Tropical bont tick).